The primary structure comprises 305 residues: UDP-3-O-acyl-N-acetylglucosamine deacetylase (305 aa).

Zn(2+) is bound by residues His-78, His-237, and Asp-241. Residue His-264 is the Proton donor of the active site.

Belongs to the LpxC family. Zn(2+) is required as a cofactor.

The enzyme catalyses a UDP-3-O-[(3R)-3-hydroxyacyl]-N-acetyl-alpha-D-glucosamine + H2O = a UDP-3-O-[(3R)-3-hydroxyacyl]-alpha-D-glucosamine + acetate. It functions in the pathway glycolipid biosynthesis; lipid IV(A) biosynthesis; lipid IV(A) from (3R)-3-hydroxytetradecanoyl-[acyl-carrier-protein] and UDP-N-acetyl-alpha-D-glucosamine: step 2/6. Functionally, catalyzes the hydrolysis of UDP-3-O-myristoyl-N-acetylglucosamine to form UDP-3-O-myristoylglucosamine and acetate, the committed step in lipid A biosynthesis. The polypeptide is UDP-3-O-acyl-N-acetylglucosamine deacetylase (Cupriavidus taiwanensis (strain DSM 17343 / BCRC 17206 / CCUG 44338 / CIP 107171 / LMG 19424 / R1) (Ralstonia taiwanensis (strain LMG 19424))).